We begin with the raw amino-acid sequence, 1364 residues long: DNA-directed RNA polymerase subunit beta' (1364 aa).

Zn(2+)-binding residues include Cys250, Cys317, Cys324, and Cys327. Residues 1318–1342 (TRHNIDPSASTNAAFTRPDVDNELK) form a disordered region.

Belongs to the RNA polymerase beta' chain family. RpoC2 subfamily. As to quaternary structure, in cyanobacteria the RNAP catalytic core is composed of 2 alpha, 1 beta, 1 beta', 1 gamma and 1 omega subunit. When a sigma factor is associated with the core the holoenzyme is formed, which can initiate transcription. The cofactor is Zn(2+).

The enzyme catalyses RNA(n) + a ribonucleoside 5'-triphosphate = RNA(n+1) + diphosphate. In terms of biological role, DNA-dependent RNA polymerase catalyzes the transcription of DNA into RNA using the four ribonucleoside triphosphates as substrates. The chain is DNA-directed RNA polymerase subunit beta' from Synechococcus sp. (strain CC9902).